Here is a 388-residue protein sequence, read N- to C-terminus: D-xylose dehydrogenase (388 aa).

It belongs to the Gfo/Idh/MocA family. Homotetramer. Requires Zn(2+) as cofactor.

The enzyme catalyses D-xylose + NADP(+) = D-xylono-1,5-lactone + NADPH + H(+). It carries out the reaction D-xylose + NAD(+) = D-xylono-1,5-lactone + NADH + H(+). It functions in the pathway carbohydrate metabolism; D-xylose degradation. Functionally, catalyzes the NADP(+)-dependent oxidation of D-xylose. Is able to use both NADP(+) and NAD(+); however, the enzyme shows a very strong preference for NADP(+). Is likely involved in the first step of the oxidative D-xylose degradation pathway. The chain is D-xylose dehydrogenase (xdh) from Paenarthrobacter nicotinovorans (Arthrobacter nicotinovorans).